We begin with the raw amino-acid sequence, 237 residues long: 3-oxoacyl-[acyl-carrier-protein] reductase (237 aa).

M1 is modified (N-acetylmethionine). NADP(+) is bound by residues 11 to 14 (SRGI), 34 to 35 (RN), D56, and 83 to 85 (AAG). S135 contacts substrate. NADP(+) contacts are provided by residues Y148, K152, and 181–183 (IHT). The active-site Proton acceptor is Y148. K195 carries the N6-acetyllysine modification.

Belongs to the short-chain dehydrogenases/reductases (SDR) family. In terms of assembly, homotetramer (in vitro). Heterotetramer with HSD17B8; contains two molecules each of HSD17B8 and CBR4. Does not form homotetramers when HSD17B8 is coexpressed, only heterotetramers (in vitro).

Its subcellular location is the mitochondrion matrix. The enzyme catalyses a (3R)-hydroxyacyl-[ACP] + NADP(+) = a 3-oxoacyl-[ACP] + NADPH + H(+). It catalyses the reaction a quinone + NADPH + H(+) = a quinol + NADP(+). It participates in lipid metabolism; fatty acid biosynthesis. Its function is as follows. Component of the heterotetramer complex KAR (3-ketoacyl-[acyl carrier protein] reductase or 3-ketoacyl-[ACP] reductase) that forms part of the mitochondrial fatty acid synthase (mtFAS). Beta-subunit of the KAR heterotetramer complex, responsible for the 3-ketoacyl-ACP reductase activity of the mtFAS, reduces 3-oxoacyl-[ACP] to (3R)-hydroxyacyl-[ACP] in a NADPH-dependent manner with no chain length preference, thereby participating in mitochondrial fatty acid biosynthesis. The homotetramer has NADPH-dependent quinone reductase activity (in vitro), hence could play a role in protection against cytotoxicity of exogenous quinones. As a heterotetramer, it can also reduce 9,10-phenanthrenequinone, 1,4-benzoquinone and various other o-quinones and p-quinones (in vitro). This chain is 3-oxoacyl-[acyl-carrier-protein] reductase (CBR4), found in Bos taurus (Bovine).